The primary structure comprises 106 residues: L-rhamnose mutarotase (106 aa).

Tyrosine 20 is a binding site for substrate. Residue histidine 24 is the Proton donor of the active site. Substrate-binding positions include tyrosine 43 and 78–79; that span reads WW.

It belongs to the rhamnose mutarotase family. As to quaternary structure, homodimer.

The protein resides in the cytoplasm. It carries out the reaction alpha-L-rhamnose = beta-L-rhamnose. The protein operates within carbohydrate metabolism; L-rhamnose metabolism. Functionally, involved in the anomeric conversion of L-rhamnose. This Brucella anthropi (strain ATCC 49188 / DSM 6882 / CCUG 24695 / JCM 21032 / LMG 3331 / NBRC 15819 / NCTC 12168 / Alc 37) (Ochrobactrum anthropi) protein is L-rhamnose mutarotase.